The primary structure comprises 319 residues: Coproporphyrin III ferrochelatase 2 (319 aa).

Fe-coproporphyrin III-binding positions include tyrosine 13, arginine 30, 46-47, serine 54, and tyrosine 125; that span reads RY. Fe(2+) is bound by residues histidine 181 and glutamate 262.

The protein belongs to the ferrochelatase family.

The protein localises to the cytoplasm. The enzyme catalyses Fe-coproporphyrin III + 2 H(+) = coproporphyrin III + Fe(2+). It functions in the pathway porphyrin-containing compound metabolism; protoheme biosynthesis. Functionally, involved in coproporphyrin-dependent heme b biosynthesis. Catalyzes the insertion of ferrous iron into coproporphyrin III to form Fe-coproporphyrin III. The chain is Coproporphyrin III ferrochelatase 2 from Bacillus thuringiensis subsp. konkukian (strain 97-27).